The following is a 119-amino-acid chain: Small ribosomal subunit protein uS10 (119 aa).

Belongs to the universal ribosomal protein uS10 family. In terms of assembly, component of the 40S small ribosomal subunit.

It is found in the cytoplasm. Functionally, component of the small ribosomal subunit. The ribosome is a large ribonucleoprotein complex responsible for the synthesis of proteins in the cell. This is Small ribosomal subunit protein uS10 (rps20) from Xenopus laevis (African clawed frog).